Reading from the N-terminus, the 225-residue chain is Holliday junction branch migration complex subunit RuvA (225 aa).

Residues 1–71 form a domain I region; it reads MISWINGDLV…EDSDLLFGFT (71 aa). Residues 72–150 form a domain II region; the sequence is SNEQKNFFIE…SEILSEEEKS (79 aa). The flexible linker stretch occupies residues 151 to 161; it reads KGELEIKDPEI. The tract at residues 161-225 is domain III; the sequence is INKMIEDLQL…LDEDSSNIAR (65 aa).

The protein belongs to the RuvA family. Homotetramer. Forms an RuvA(8)-RuvB(12)-Holliday junction (HJ) complex. HJ DNA is sandwiched between 2 RuvA tetramers; dsDNA enters through RuvA and exits via RuvB. An RuvB hexamer assembles on each DNA strand where it exits the tetramer. Each RuvB hexamer is contacted by two RuvA subunits (via domain III) on 2 adjacent RuvB subunits; this complex drives branch migration. In the full resolvosome a probable DNA-RuvA(4)-RuvB(12)-RuvC(2) complex forms which resolves the HJ.

Its subcellular location is the cytoplasm. The RuvA-RuvB-RuvC complex processes Holliday junction (HJ) DNA during genetic recombination and DNA repair, while the RuvA-RuvB complex plays an important role in the rescue of blocked DNA replication forks via replication fork reversal (RFR). RuvA specifically binds to HJ cruciform DNA, conferring on it an open structure. The RuvB hexamer acts as an ATP-dependent pump, pulling dsDNA into and through the RuvAB complex. HJ branch migration allows RuvC to scan DNA until it finds its consensus sequence, where it cleaves and resolves the cruciform DNA. In Prochlorococcus marinus (strain MIT 9301), this protein is Holliday junction branch migration complex subunit RuvA.